Consider the following 206-residue polypeptide: Ras-related protein ralB-B (206 aa).

GTP is bound at residue 21–28 (GSGGVGKS). Residues 43–51 (YEPTKADSY) carry the Effector region motif. Residues 68–72 (DTAGQ) and 128–131 (NKSD) contribute to the GTP site. Basic and acidic residues predominate over residues 180–189 (KMSENKDKNG). The disordered stretch occupies residues 180-206 (KMSENKDKNGKKSGKSKKGFKQRCCLL). Positions 190–200 (KKSGKSKKGFK) are enriched in basic residues. The residue at position 203 (C203) is a Cysteine methyl ester. The S-geranylgeranyl cysteine moiety is linked to residue C203. The propeptide at 204 to 206 (CLL) is removed in mature form.

This sequence belongs to the small GTPase superfamily. Ras family. Interacts with ralbp1 and rap1gds1.

The protein localises to the cell membrane. The protein resides in the midbody. The catalysed reaction is GTP + H2O = GDP + phosphate + H(+). Its function is as follows. Multifunctional GTPase involved in a variety of cellular processes including gene expression, cell migration, cell proliferation, oncogenic transformation and membrane trafficking. Accomplishes its multiple functions by interacting with distinct downstream effectors. Acts as a GTP sensor for GTP-dependent exocytosis of dense core vesicles. Required both to stabilize the assembly of the exocyst complex and to localize functional exocyst complexes to the leading edge of migrating cells. Required for suppression of apoptosis. In late stages of cytokinesis, upon completion of the bridge formation between dividing cells, mediates exocyst recruitment to the midbody to drive abscission. Regulates the actin cytoskeleton to play a role in gastrulation or neurulation. During the cleavage stages, the GTP-bound form induces a cortical reaction that affects the localization of pigment granules. Activated by the FGF pathway via ras and ral-GDS, but independently of raf. Directs ralbp1 to the plasma membrane. Involved in ligand-dependent receptor mediated endocytosis of the EGF and insulin receptors. In Xenopus laevis (African clawed frog), this protein is Ras-related protein ralB-B (ralb-b).